The primary structure comprises 700 residues: Elongation factor G (700 aa).

The tr-type G domain maps to 8 to 290 (ERYRNIGISA…GVIDFMPSPI (283 aa)). GTP is bound by residues 17–24 (AHIDAGKT), 88–92 (DTPGH), and 142–145 (NKMD).

This sequence belongs to the TRAFAC class translation factor GTPase superfamily. Classic translation factor GTPase family. EF-G/EF-2 subfamily.

Its subcellular location is the cytoplasm. Catalyzes the GTP-dependent ribosomal translocation step during translation elongation. During this step, the ribosome changes from the pre-translocational (PRE) to the post-translocational (POST) state as the newly formed A-site-bound peptidyl-tRNA and P-site-bound deacylated tRNA move to the P and E sites, respectively. Catalyzes the coordinated movement of the two tRNA molecules, the mRNA and conformational changes in the ribosome. The chain is Elongation factor G from Methylibium petroleiphilum (strain ATCC BAA-1232 / LMG 22953 / PM1).